Here is a 206-residue protein sequence, read N- to C-terminus: Outer-membrane lipoprotein carrier protein (206 aa).

The N-terminal stretch at Met1–Ala20 is a signal peptide.

Belongs to the LolA family. Monomer.

The protein resides in the periplasm. Participates in the translocation of lipoproteins from the inner membrane to the outer membrane. Only forms a complex with a lipoprotein if the residue after the N-terminal Cys is not an aspartate (The Asp acts as a targeting signal to indicate that the lipoprotein should stay in the inner membrane). The protein is Outer-membrane lipoprotein carrier protein of Wigglesworthia glossinidia brevipalpis.